The primary structure comprises 1368 residues: Beclin-1-like protein A (1368 aa).

Low complexity-rich tracts occupy residues 24–57 (GSGS…NNGP) and 122–135 (NSII…SPSN). Disordered stretches follow at residues 24–64 (GSGS…PSSE), 122–249 (NSII…SLMM), 331–431 (NKNN…STNS), 819–874 (TITP…NNNN), and 992–1048 (IDGN…NDNN). A compositionally biased stretch (polar residues) spans 136 to 147 (AITRNNSFNMDP). Residues 148 to 167 (NNNNNNNNNNNNNNNNNNNN) show a composition bias toward low complexity. Over residues 168 to 177 (GEYMNSSIVF) the composition is skewed to polar residues. Residues 179 to 246 (NNVNNNNNNP…INNSVNSVNS (68 aa)) show a composition bias toward low complexity. Composition is skewed to low complexity over residues 992–1005 (IDGN…NDNN) and 1015–1048 (NNNN…NDNN). Residues 1047–1150 (NNYNFENEIN…AIRDQLERVS (104 aa)) adopt a coiled-coil conformation.

This sequence belongs to the beclin family.

Its subcellular location is the endosome membrane. Functionally, involved in autophagy. May be required to recruit the atg8-phosphatidylinositol conjugate and the atg12-atg5 conjugate to the pre-autophagosomal structure. Required for normal survival when exposed to pathogenic bacteria S.typhimurium by promoting autophagic degradation of intracellular S.typhimurium. This chain is Beclin-1-like protein A (atg6A), found in Dictyostelium discoideum (Social amoeba).